The sequence spans 373 residues: Bifunctional enzyme IspD/IspF (373 aa).

Positions 1–213 (MSDLTLVLLG…CLQKPSATKR (213 aa)) are 2-C-methyl-D-erythritol 4-phosphate cytidylyltransferase. The tract at residues 213–373 (RIGNGLDVHA…TLHYFDWSEI (161 aa)) is 2-C-methyl-D-erythritol 2,4-cyclodiphosphate synthase. A divalent metal cation is bound by residues Asp-219 and His-221. 4-CDP-2-C-methyl-D-erythritol 2-phosphate-binding positions include 219 to 221 (DVH) and 245 to 246 (HS). Residue His-253 participates in a divalent metal cation binding. 4-CDP-2-C-methyl-D-erythritol 2-phosphate contacts are provided by residues 267-269 (DIG), 272-276 (FPDSD), 343-346 (TTTE), Phe-350, and Arg-353.

This sequence in the N-terminal section; belongs to the IspD/TarI cytidylyltransferase family. IspD subfamily. In the C-terminal section; belongs to the IspF family. Requires a divalent metal cation as cofactor.

It catalyses the reaction 2-C-methyl-D-erythritol 4-phosphate + CTP + H(+) = 4-CDP-2-C-methyl-D-erythritol + diphosphate. It carries out the reaction 4-CDP-2-C-methyl-D-erythritol 2-phosphate = 2-C-methyl-D-erythritol 2,4-cyclic diphosphate + CMP. It participates in isoprenoid biosynthesis; isopentenyl diphosphate biosynthesis via DXP pathway; isopentenyl diphosphate from 1-deoxy-D-xylulose 5-phosphate: step 2/6. It functions in the pathway isoprenoid biosynthesis; isopentenyl diphosphate biosynthesis via DXP pathway; isopentenyl diphosphate from 1-deoxy-D-xylulose 5-phosphate: step 4/6. Its function is as follows. Bifunctional enzyme that catalyzes the formation of 4-diphosphocytidyl-2-C-methyl-D-erythritol from CTP and 2-C-methyl-D-erythritol 4-phosphate (MEP) (IspD), and catalyzes the conversion of 4-diphosphocytidyl-2-C-methyl-D-erythritol 2-phosphate (CDP-ME2P) to 2-C-methyl-D-erythritol 2,4-cyclodiphosphate (ME-CPP) with a corresponding release of cytidine 5-monophosphate (CMP) (IspF). In Nitratiruptor sp. (strain SB155-2), this protein is Bifunctional enzyme IspD/IspF.